The primary structure comprises 177 residues: Calcineurin subunit B (177 aa).

4 consecutive EF-hand domains span residues K25–P60, V62–Q92, D94–N129, and Q135–E170. Residues D38, D40, N42, T44, E49, D70, N72, D74, S76, E81, D107, D109, D111, Y113, E118, D148, D150, D152, K154, and E159 each contribute to the Ca(2+) site.

Belongs to the calcineurin regulatory subunit family. As to quaternary structure, composed of a catalytic subunit (A) and a regulatory subunit (B).

Regulatory subunit of calcineurin, a calcium-dependent, calmodulin stimulated protein phosphatase. Confers calcium sensitivity. The chain is Calcineurin subunit B (CNB1) from Naegleria gruberi (Amoeba).